Here is a 447-residue protein sequence, read N- to C-terminus: Glucose-6-phosphate isomerase (447 aa).

Catalysis depends on E288, which acts as the Proton donor. Catalysis depends on residues H309 and K423.

It belongs to the GPI family.

The protein resides in the cytoplasm. The enzyme catalyses alpha-D-glucose 6-phosphate = beta-D-fructose 6-phosphate. Its pathway is carbohydrate biosynthesis; gluconeogenesis. The protein operates within carbohydrate degradation; glycolysis; D-glyceraldehyde 3-phosphate and glycerone phosphate from D-glucose: step 2/4. In terms of biological role, catalyzes the reversible isomerization of glucose-6-phosphate to fructose-6-phosphate. The chain is Glucose-6-phosphate isomerase from Lactobacillus gasseri (strain ATCC 33323 / DSM 20243 / BCRC 14619 / CIP 102991 / JCM 1131 / KCTC 3163 / NCIMB 11718 / NCTC 13722 / AM63).